A 169-amino-acid polypeptide reads, in one-letter code: Peptide deformylase 1 (169 aa).

Positions 92 and 134 each coordinate Fe cation. Residue glutamate 135 is part of the active site. A Fe cation-binding site is contributed by histidine 138.

Belongs to the polypeptide deformylase family. Fe(2+) is required as a cofactor.

The catalysed reaction is N-terminal N-formyl-L-methionyl-[peptide] + H2O = N-terminal L-methionyl-[peptide] + formate. Functionally, removes the formyl group from the N-terminal Met of newly synthesized proteins. Requires at least a dipeptide for an efficient rate of reaction. N-terminal L-methionine is a prerequisite for activity but the enzyme has broad specificity at other positions. The polypeptide is Peptide deformylase 1 (Ralstonia nicotianae (strain ATCC BAA-1114 / GMI1000) (Ralstonia solanacearum)).